The following is a 790-amino-acid chain: Mitochondrial intermediate peptidase (790 aa).

A mitochondrion-targeting transit peptide spans 1-29 (MLKRLARNNSSPWICSRCLQQSQRQRRFN). His-570 contributes to the Zn(2+) binding site. Glu-571 is a catalytic residue. Zn(2+) is bound by residues His-574 and His-577.

Belongs to the peptidase M3 family. Zn(2+) is required as a cofactor.

The protein resides in the mitochondrion matrix. It carries out the reaction Release of an N-terminal octapeptide as second stage of processing of some proteins imported into the mitochondrion.. Functionally, cleaves proteins, imported into the mitochondrion, to their mature size. While most mitochondrial precursor proteins are processed to the mature form in one step by mitochondrial processing peptidase (MPP), the sequential cleavage by MIP of an octapeptide after initial processing by MPP is a required step for a subgroup of nuclear-encoded precursor proteins destined for the matrix or the inner membrane. In Phaeosphaeria nodorum (strain SN15 / ATCC MYA-4574 / FGSC 10173) (Glume blotch fungus), this protein is Mitochondrial intermediate peptidase (OCT1).